A 517-amino-acid polypeptide reads, in one-letter code: Probable anion transporter 6, chloroplastic (517 aa).

The interval T51 to L73 is disordered. Residues E52–K70 show a composition bias toward basic and acidic residues. A run of 10 helical transmembrane segments spans residues F130 to L150, I170 to P190, F229 to I249, E255 to L275, S312 to G332, L352 to L372, I397 to P417, I420 to C440, I452 to T472, and M484 to F504.

This sequence belongs to the major facilitator superfamily. Sodium/anion cotransporter (TC 2.A.1.14) family. In terms of tissue distribution, expressed in leaf veins and sepals.

The protein localises to the plastid. It localises to the chloroplast membrane. Functionally, inorganic phosphate and probable anion transporter. In Arabidopsis thaliana (Mouse-ear cress), this protein is Probable anion transporter 6, chloroplastic (ANTR6).